Here is a 371-residue protein sequence, read N- to C-terminus: Transaldolase (371 aa).

K140 (schiff-base intermediate with substrate) is an active-site residue.

Belongs to the transaldolase family. Type 2 subfamily.

The protein resides in the cytoplasm. It catalyses the reaction D-sedoheptulose 7-phosphate + D-glyceraldehyde 3-phosphate = D-erythrose 4-phosphate + beta-D-fructose 6-phosphate. It functions in the pathway carbohydrate degradation; pentose phosphate pathway; D-glyceraldehyde 3-phosphate and beta-D-fructose 6-phosphate from D-ribose 5-phosphate and D-xylulose 5-phosphate (non-oxidative stage): step 2/3. Its function is as follows. Transaldolase is important for the balance of metabolites in the pentose-phosphate pathway. The chain is Transaldolase from Frankia alni (strain DSM 45986 / CECT 9034 / ACN14a).